Reading from the N-terminus, the 413-residue chain is Gamma-glutamyl phosphate reductase (413 aa).

Belongs to the gamma-glutamyl phosphate reductase family.

Its subcellular location is the cytoplasm. It carries out the reaction L-glutamate 5-semialdehyde + phosphate + NADP(+) = L-glutamyl 5-phosphate + NADPH + H(+). It functions in the pathway amino-acid biosynthesis; L-proline biosynthesis; L-glutamate 5-semialdehyde from L-glutamate: step 2/2. Functionally, catalyzes the NADPH-dependent reduction of L-glutamate 5-phosphate into L-glutamate 5-semialdehyde and phosphate. The product spontaneously undergoes cyclization to form 1-pyrroline-5-carboxylate. The protein is Gamma-glutamyl phosphate reductase of Rhodococcus jostii (strain RHA1).